The primary structure comprises 147 residues: Nucleoside diphosphate kinase (147 aa).

ATP is bound by residues K9, F57, R85, T91, R102, and N112. Catalysis depends on H115, which acts as the Pros-phosphohistidine intermediate.

It belongs to the NDK family. Homotetramer. The cofactor is Mg(2+).

It localises to the cytoplasm. The catalysed reaction is a 2'-deoxyribonucleoside 5'-diphosphate + ATP = a 2'-deoxyribonucleoside 5'-triphosphate + ADP. It carries out the reaction a ribonucleoside 5'-diphosphate + ATP = a ribonucleoside 5'-triphosphate + ADP. Functionally, major role in the synthesis of nucleoside triphosphates other than ATP. The ATP gamma phosphate is transferred to the NDP beta phosphate via a ping-pong mechanism, using a phosphorylated active-site intermediate. This is Nucleoside diphosphate kinase from Listeria monocytogenes serotype 4b (strain CLIP80459).